Here is a 578-residue protein sequence, read N- to C-terminus: Asparagine synthetase [glutamine-hydrolyzing] 2 (578 aa).

Catalysis depends on cysteine 2, which acts as the For GATase activity. Residues 2–185 form the Glutamine amidotransferase type-2 domain; sequence CGILAVLGCI…PGHIYSSKQG (184 aa). L-glutamine contacts are provided by residues 50–54, 75–77, and aspartate 98; these read RLAII and NGE. The Asparagine synthetase domain occupies 210–450; that stretch reads LRNAFEKAVI…LPKHILYRQK (241 aa). ATP is bound by residues leucine 231, isoleucine 267, and 341–342; that span reads SG.

In terms of tissue distribution, expressed in the vascular region adjacent to leaf mesophyll cells in the companion cell-sieve tube element complex.

The enzyme catalyses L-aspartate + L-glutamine + ATP + H2O = L-asparagine + L-glutamate + AMP + diphosphate + H(+). It participates in amino-acid biosynthesis; L-asparagine biosynthesis. Functionally, essential for nitrogen assimilation, distribution and remobilization within the plant via the phloem. The polypeptide is Asparagine synthetase [glutamine-hydrolyzing] 2 (ASN2) (Arabidopsis thaliana (Mouse-ear cress)).